The chain runs to 1481 residues: ABC multidrug transporter atrH (1481 aa).

Positions 1–10 are enriched in basic and acidic residues; it reads MALPREERSL. Disordered stretches follow at residues 1–45 and 61–89; these read MALP…GIEQ and ISQT…SDQF. N-linked (GlcNAc...) asparagine glycans are attached at residues Asn-19, Asn-76, and Asn-320. The ABC transporter 1 domain occupies 134–396; that stretch reads ATVSNVWLKA…FIEMGFDCPE (263 aa). The helical transmembrane segment at 507–527 threads the bilayer; the sequence is MTLSTVIGNSILALIISSVFY. N-linked (GlcNAc...) asparagine glycosylation is present at Asn-530. The next 5 helical transmembrane spans lie at 542-562, 587-607, 616-636, 650-670, and 758-778; these read LLFF…LTLW, LIVD…ILYF, GHFF…SNVF, EVPA…TIPV, and FGIL…ASEL. The region spanning 838–1081 is the ABC transporter 2 domain; that stretch reads FHWQDVCYDI…LIKYFEDKGS (244 aa). 874 to 881 contacts ATP; it reads GVTGAGKT. Transmembrane regions (helical) follow at residues 1174–1194, 1210–1230, 1249–1269, 1298–1318, 1327–1347, and 1358–1378; these read YIYA…FTFW, IFML…YFAM, AFML…AVPA, LLVL…IAGI, IAQL…SPDV, and ASPF…GAPV. An N-linked (GlcNAc...) asparagine glycan is attached at Asn-1395. Residues 1446-1466 form a helical membrane-spanning segment; it reads VGILFVYIVFNTVAAVFLYWL.

Belongs to the ABC transporter superfamily. ABCG family. PDR (TC 3.A.1.205) subfamily.

It is found in the cell membrane. In terms of biological role, pleiotropic ABC efflux transporter involved in the basal level of azole susceptibility. This Aspergillus oryzae (strain ATCC 42149 / RIB 40) (Yellow koji mold) protein is ABC multidrug transporter atrH.